The sequence spans 226 residues: MASQISQLACFSSTNRQFHFQSRSFPCPMIRPQSFVVKSVDGNSSETPASLSYTAEVSKPVVEKTSKPYSTVDETATNKESITEPVEEDVATQPIRAAKIHDFCFGIPYGGLVVSGGLLGFAFSRNLTSLSTGVLYGGGLLALSTLSLKIWREGKSSFPYILGQAVLSAVVFWKNFTAYSMTKKLFPAGVFAVISACMLCFYSYVVLSGGNPPPKKLKPSATSPSY.

A chloroplast-targeting transit peptide spans 1–39 (MASQISQLACFSSTNRQFHFQSRSFPCPMIRPQSFVVKS). Residues 66–87 (SKPYSTVDETATNKESITEPVE) are disordered. Polar residues predominate over residues 67-80 (KPYSTVDETATNKE). 3 helical membrane-spanning segments follow: residues 130-150 (LSTG…SLKI), 158-178 (FPYI…NFTA), and 186-206 (FPAG…SYVV).

This sequence belongs to the TMEM14 family. In terms of tissue distribution, expressed in cotyledons, leaves, sepals and pollen.

It localises to the plastid. Its subcellular location is the chloroplast inner membrane. In terms of biological role, mediates the export of free fatty acid from the plastids. Potentially prefers palmitic acid (C16:0) over oleic acid (C18:1) and stearic acid (C18:0). Not involved in fatty acid activation. Required for biogenesis of the outer pollen cell wall, in particular for the assembly of exine and pollen coat and for the release of ketone wax components. The sequence is that of Protein FATTY ACID EXPORT 1, chloroplastic from Arabidopsis thaliana (Mouse-ear cress).